The following is a 103-amino-acid chain: Protein translation factor SUI1 homolog (103 aa).

This sequence belongs to the SUI1 family.

This is Protein translation factor SUI1 homolog from Hyperthermus butylicus (strain DSM 5456 / JCM 9403 / PLM1-5).